Here is a 194-residue protein sequence, read N- to C-terminus: Small ribosomal subunit protein uS4c (194 aa).

Residues 1 to 29 (RFKKIRRLGTLPGLTSKRPRSGSDLKNPL) are disordered. The 62-residue stretch at 82-143 (MRLDNILFRL…KQRSKALIQN (62 aa)) folds into the S4 RNA-binding domain.

The protein belongs to the universal ribosomal protein uS4 family. In terms of assembly, part of the 30S ribosomal subunit. Contacts protein S5. The interaction surface between S4 and S5 is involved in control of translational fidelity.

It localises to the plastid. The protein localises to the chloroplast. In terms of biological role, one of the primary rRNA binding proteins, it binds directly to 16S rRNA where it nucleates assembly of the body of the 30S subunit. With S5 and S12 plays an important role in translational accuracy. The sequence is that of Small ribosomal subunit protein uS4c (rps4) from Furcraea foetida (Mauritius hemp).